Here is a 378-residue protein sequence, read N- to C-terminus: Chaperone protein DnaJ (378 aa).

Residues 3 to 67 (DFYDTLGVNR…EKRARYDQFG (65 aa)) enclose the J domain. Residues 132 to 214 (GQEREIKIPH…CGGQGVKQVR (83 aa)) form a CR-type zinc finger. The Zn(2+) site is built by cysteine 145, cysteine 148, cysteine 162, cysteine 165, cysteine 188, cysteine 191, cysteine 202, and cysteine 205. 4 CXXCXGXG motif repeats span residues 145 to 152 (CDVCRGTG), 162 to 169 (CSTCGGAG), 188 to 195 (CPTCSGSG), and 202 to 209 (CQSCGGQG).

It belongs to the DnaJ family. Homodimer. Zn(2+) is required as a cofactor.

It is found in the cytoplasm. Functionally, participates actively in the response to hyperosmotic and heat shock by preventing the aggregation of stress-denatured proteins and by disaggregating proteins, also in an autonomous, DnaK-independent fashion. Unfolded proteins bind initially to DnaJ; upon interaction with the DnaJ-bound protein, DnaK hydrolyzes its bound ATP, resulting in the formation of a stable complex. GrpE releases ADP from DnaK; ATP binding to DnaK triggers the release of the substrate protein, thus completing the reaction cycle. Several rounds of ATP-dependent interactions between DnaJ, DnaK and GrpE are required for fully efficient folding. Also involved, together with DnaK and GrpE, in the DNA replication of plasmids through activation of initiation proteins. The protein is Chaperone protein DnaJ of Prochlorococcus marinus (strain SARG / CCMP1375 / SS120).